A 394-amino-acid polypeptide reads, in one-letter code: Elongation factor Tu (394 aa).

The tr-type G domain maps to 10–205; that stretch reads KPHVNIGTIG…VDTWIPLPPR (196 aa). The tract at residues 19 to 26 is G1; it reads GHVDHGKT. 19-26 serves as a coordination point for GTP; sequence GHVDHGKT. Position 26 (threonine 26) interacts with Mg(2+). Residues 60–64 form a G2 region; sequence GITIN. Residues 81–84 are G3; that stretch reads DCPG. GTP contacts are provided by residues 81–85 and 136–139; these read DCPGH and NKCD. Residues 136–139 are G4; that stretch reads NKCD. Positions 174–176 are G5; it reads SAL.

It belongs to the TRAFAC class translation factor GTPase superfamily. Classic translation factor GTPase family. EF-Tu/EF-1A subfamily. In terms of assembly, monomer.

It localises to the cytoplasm. The catalysed reaction is GTP + H2O = GDP + phosphate + H(+). In terms of biological role, GTP hydrolase that promotes the GTP-dependent binding of aminoacyl-tRNA to the A-site of ribosomes during protein biosynthesis. The protein is Elongation factor Tu of Phocaeicola vulgatus (strain ATCC 8482 / DSM 1447 / JCM 5826 / CCUG 4940 / NBRC 14291 / NCTC 11154) (Bacteroides vulgatus).